Here is a 245-residue protein sequence, read N- to C-terminus: MTYTLVLLRHGESEWNALNLFTGWVDVHLTDKGVAEGKRAGELLAEHGILPDIVYTSLLRRAISTANIALDAADRHWIPVVRDWRLNERHYGELQGKNKAQIRDKYGEEQFMLWRRSYDTPPPPIEAGNEYSQEGDARYAGIDIPKTECLLDVVNRMVPYWESTISKDLLAGKTVLIAAHGNSLRALVKHLDQISDEEIAGLNIPTGIPLRYELDENLRPVRPREYLDPEAAAAGAAAVASQGGK.

Substrate contacts are provided by residues 9-16, 22-23, Arg61, 88-91, Lys99, 115-116, and 181-182; these read RHGESEWN, TG, ERHY, RR, and GN. Catalysis depends on His10, which acts as the Tele-phosphohistidine intermediate. Residue Glu88 is the Proton donor/acceptor of the active site.

It belongs to the phosphoglycerate mutase family. BPG-dependent PGAM subfamily.

It catalyses the reaction (2R)-2-phosphoglycerate = (2R)-3-phosphoglycerate. Its pathway is carbohydrate degradation; glycolysis; pyruvate from D-glyceraldehyde 3-phosphate: step 3/5. Its function is as follows. Catalyzes the interconversion of 2-phosphoglycerate and 3-phosphoglycerate. The protein is 2,3-bisphosphoglycerate-dependent phosphoglycerate mutase of Nocardia farcinica (strain IFM 10152).